Reading from the N-terminus, the 600-residue chain is Cytidine monophosphate-N-acetylneuraminic acid hydroxylase (600 aa).

One can recognise a Rieske domain in the interval 9-107 (LSPVEVASLK…VEMDENNRLL (99 aa)). [2Fe-2S] cluster is bound by residues Cys49, His51, Cys70, and His73.

This sequence belongs to the CMP-Neu5Ac hydroxylase family. It depends on [2Fe-2S] cluster as a cofactor.

Its subcellular location is the cytoplasm. It catalyses the reaction CMP-N-acetyl-beta-neuraminate + 2 Fe(II)-[cytochrome b5] + O2 + 2 H(+) = CMP-N-glycoloyl-beta-neuraminate + 2 Fe(III)-[cytochrome b5] + H2O. It functions in the pathway amino-sugar metabolism; N-acetylneuraminate metabolism. Functionally, sialic acids are components of carbohydrate chains of glycoconjugates and are involved in cell-cell recognition and cell-pathogen interactions. Catalyzes the conversion of CMP-N-acetylneuraminic acid (CMP-Neu5Ac) into its hydroxylated derivative CMP-N-glycolylneuraminic acid (CMP-Neu5Gc), a sialic acid abundantly expressed at the surface of many cells. This is Cytidine monophosphate-N-acetylneuraminic acid hydroxylase (CMAH) from Gorilla gorilla gorilla (Western lowland gorilla).